The chain runs to 238 residues: 2,3,4,5-tetrahydropyridine-2,6-dicarboxylate N-acetyltransferase (238 aa).

The protein belongs to the transferase hexapeptide repeat family. DapH subfamily.

The catalysed reaction is (S)-2,3,4,5-tetrahydrodipicolinate + acetyl-CoA + H2O = L-2-acetamido-6-oxoheptanedioate + CoA. Its pathway is amino-acid biosynthesis; L-lysine biosynthesis via DAP pathway; LL-2,6-diaminopimelate from (S)-tetrahydrodipicolinate (acetylase route): step 1/3. Catalyzes the transfer of an acetyl group from acetyl-CoA to tetrahydrodipicolinate. The polypeptide is 2,3,4,5-tetrahydropyridine-2,6-dicarboxylate N-acetyltransferase (Clostridioides difficile (strain 630) (Peptoclostridium difficile)).